Consider the following 493-residue polypeptide: Cobyric acid synthase (493 aa).

A GATase cobBQ-type domain is found at Pro246–Phe440. Cys326 functions as the Nucleophile in the catalytic mechanism. His432 is an active-site residue.

It belongs to the CobB/CobQ family. CobQ subfamily.

Its pathway is cofactor biosynthesis; adenosylcobalamin biosynthesis. Catalyzes amidations at positions B, D, E, and G on adenosylcobyrinic A,C-diamide. NH(2) groups are provided by glutamine, and one molecule of ATP is hydrogenolyzed for each amidation. This is Cobyric acid synthase from Clostridium botulinum (strain Okra / Type B1).